A 345-amino-acid polypeptide reads, in one-letter code: uncharacterized protein (345 aa).

3 Solcar repeats span residues 80–153, 162–246, and 256–339; these read MSFF…MKSR, SDPQ…LKLK, and NLAH…ILNF. The next 6 membrane-spanning stretches (helical) occupy residues 83–103, 128–148, 220–240, 262–282, 296–316, and 319–339; these read FEAL…LFPI, GLGS…TTYE, AGYG…FPIW, AISG…FDVV, VFTI…KGIV, and VLWL…ILNF.

The protein belongs to the mitochondrial carrier (TC 2.A.29) family.

Its subcellular location is the mitochondrion inner membrane. This is an uncharacterized protein from Schizosaccharomyces pombe (strain 972 / ATCC 24843) (Fission yeast).